We begin with the raw amino-acid sequence, 530 residues long: 2,3-bisphosphoglycerate-independent phosphoglycerate mutase (530 aa).

Residues aspartate 15 and serine 65 each contribute to the Mn(2+) site. Serine 65 functions as the Phosphoserine intermediate in the catalytic mechanism. Substrate-binding positions include histidine 126, 155 to 156, arginine 187, arginine 193, 257 to 260, and lysine 330; these read RD and RPDR. Mn(2+) contacts are provided by aspartate 397, histidine 401, aspartate 438, histidine 439, and histidine 456.

The protein belongs to the BPG-independent phosphoglycerate mutase family. As to quaternary structure, monomer. The cofactor is Mn(2+).

The enzyme catalyses (2R)-2-phosphoglycerate = (2R)-3-phosphoglycerate. Its pathway is carbohydrate degradation; glycolysis; pyruvate from D-glyceraldehyde 3-phosphate: step 3/5. Catalyzes the interconversion of 2-phosphoglycerate and 3-phosphoglycerate. The polypeptide is 2,3-bisphosphoglycerate-independent phosphoglycerate mutase (Synechococcus sp. (strain JA-3-3Ab) (Cyanobacteria bacterium Yellowstone A-Prime)).